The chain runs to 116 residues: Selenoprotein H (116 aa).

Position 20 is an N6-acetyllysine (lysine 20). The cysteinyl-selenocysteine (Cys-Sec); redox-active cross-link spans 35-38; that stretch reads CTSU. Position 38 (selenocysteine 38) is a non-standard amino acid, selenocysteine.

This sequence belongs to the SelWTH family.

May be involved in a redox-related process. The polypeptide is Selenoprotein H (Mus musculus (Mouse)).